The chain runs to 405 residues: MDHLPMPKFGPLAGLRVVFSGIEIAGPFAGQMFAEWGAEVIWIENVAWADTIRVQPNYPQLSRRNLHALSLNIFKDEGREAFLKLMETTDIFIEASKGPAFARRGITDEVLWQHNPKLVIAHLSGFGQYGTEEYTNLPAYNTIAQAFSGYLIQNGDVDQPMPAFPYTADYFSGLTATTAALAALHKVRETGKGESIDIAMYEVMLRMGQYFMMDYFNGGEMCPRMSKGKDPYYAGCGLYKCADGYIVMELVGITQIEECFKDIGLAHLLGTPEIPEGTQLIHRIECPYGPLVEEKLDAWLATHTIAEVKERFAELNIACAKVLTVPELESNPQYVARESITQWQTMDGRTCKGPNIMPKFKNNPGQIWRGMPSHGMDTAAILKNIGYSENDIQELVSKGLAKVED.

Lys-97 and Arg-104 together coordinate CoA. Asp-169 serves as the catalytic Nucleophile.

This sequence belongs to the CoA-transferase III family. CaiB subfamily. Homodimer.

Its subcellular location is the cytoplasm. The enzyme catalyses crotonobetainyl-CoA + (R)-carnitine = crotonobetaine + (R)-carnitinyl-CoA. It carries out the reaction 4-(trimethylamino)butanoyl-CoA + (R)-carnitine = (R)-carnitinyl-CoA + 4-(trimethylamino)butanoate. It participates in amine and polyamine metabolism; carnitine metabolism. In terms of biological role, catalyzes the reversible transfer of the CoA moiety from gamma-butyrobetainyl-CoA to L-carnitine to generate L-carnitinyl-CoA and gamma-butyrobetaine. Is also able to catalyze the reversible transfer of the CoA moiety from gamma-butyrobetainyl-CoA or L-carnitinyl-CoA to crotonobetaine to generate crotonobetainyl-CoA. In Escherichia coli (strain K12 / MC4100 / BW2952), this protein is L-carnitine CoA-transferase.